The primary structure comprises 269 residues: Eukaryotic translation initiation factor 3 subunit G (269 aa).

A disordered region spans residues 140 to 181 (AIGGGDMSAQGGSGSGRYVPPSLRAGARDPSSNAYQDQRERD). A compositionally biased stretch (gly residues) spans 141-154 (IGGGDMSAQGGSGS). A Phosphoserine modification is found at Ser-161. Residues 184 to 263 (KTIRLTQVNE…FMLHAEWSKP (80 aa)) form the RRM domain.

The protein belongs to the eIF-3 subunit G family. Component of the eukaryotic translation initiation factor 3 (eIF-3) complex.

The protein resides in the cytoplasm. RNA-binding component of the eukaryotic translation initiation factor 3 (eIF-3) complex, which is involved in protein synthesis of a specialized repertoire of mRNAs and, together with other initiation factors, stimulates binding of mRNA and methionyl-tRNAi to the 40S ribosome. The eIF-3 complex specifically targets and initiates translation of a subset of mRNAs involved in cell proliferation. This subunit can bind 18S rRNA. The polypeptide is Eukaryotic translation initiation factor 3 subunit G (Kluyveromyces lactis (strain ATCC 8585 / CBS 2359 / DSM 70799 / NBRC 1267 / NRRL Y-1140 / WM37) (Yeast)).